A 594-amino-acid chain; its full sequence is MGHCYSRNISAVEDDEIPTGNGEVSNQPSQNHRHASIPQSPVASGTPEVNSYNISPFQSPLPAGVAPSPARTPGRKFKWPFPPPSPAKPIMAALRRRRGAPPQPRDEPIPEDSEDVVDHGGDSGGGERLDKNFGFGKNFEGKYELGKEVGRGHFGHTCWAKAKKGKMKNQTVAVKIISKAKMTSTLSIEDVRREVKLLKALSGHRHMVKFYDVYEDADNVFVVMELCEGGELLDRILARGGRYPEVDAKRILVQILSATAFFHLQGVVHRDLKPENFLFTSRNEDAILKVIDFGLSDFIRYDQRLNDVVGSAYYVAPEVLHRSYSTEADMWSIGVISYILLCGSRPFYGRTESAIFRCVLRANPNFEDMPWPSISPTAKDFVKRLLNKDHRKRMTAAQALAHPWLRDENPGLLLDFSVYKLVKSYIRASPFRRSALKALSKAIPDEELVFLKAQFMLLDPKDGGLSLNCFTMALTRYATDAMMESRLPDILNTMQPLAQKKLDFEEFCAAAVSVYQLEALEEWEQIATSAFEHFEHEGNRIISVQELAGEMSVGPSAYPLLKDWIRSSDGKLSFLGYAKFLHGVTVRSSSSRPR.

Positions 1–131 (MGHCYSRNIS…DSGGGERLDK (131 aa)) are disordered. Glycine 2 is lipidated: N-myristoyl glycine. The span at 37-58 (IPQSPVASGTPEVNSYNISPFQ) shows a compositional bias: polar residues. Basic and acidic residues predominate over residues 116 to 131 (VVDHGGDSGGGERLDK). The 263-residue stretch at 143-405 (YELGKEVGRG…AAQALAHPWL (263 aa)) folds into the Protein kinase domain. Residues 149-157 (VGRGHFGHT) and lysine 175 contribute to the ATP site. Aspartate 271 serves as the catalytic Proton acceptor. Serine 311 is modified (phosphoserine). Positions 409 to 439 (NPGLLLDFSVYKLVKSYIRASPFRRSALKAL) are autoinhibitory domain. The tract at residues 428–448 (ASPFRRSALKALSKAIPDEEL) is calmodulin binding (CaMBD). 4 consecutive EF-hand domains span residues 446-481 (EELVFLKAQFMLLDPKDGGLSLNCFTMALTRYATDA), 482-517 (MMESRLPDILNTMQPLAQKKLDFEEFCAAAVSVYQL), 518-557 (EALEEWEQIATSAFEHFEHEGNRIISVQELAGEMSVGPSA), and 558-587 (YPLLKDWIRSSDGKLSFLGYAKFLHGVTVR). Ca(2+) is bound by residues aspartate 462, lysine 501, glutamate 506, asparagine 539, glutamate 546, serine 567, aspartate 569, and lysine 571. Serine 573 bears the Phosphoserine mark.

This sequence belongs to the protein kinase superfamily. Ser/Thr protein kinase family. CDPK subfamily. As to quaternary structure, binds calmodulin (CaM) in a calcium-dependent manner. Autophosphorylated.

The protein resides in the cell membrane. The enzyme catalyses L-seryl-[protein] + ATP = O-phospho-L-seryl-[protein] + ADP + H(+). It catalyses the reaction L-threonyl-[protein] + ATP = O-phospho-L-threonyl-[protein] + ADP + H(+). Activated by calcium and calmodulin. Autophosphorylation may play an important role in the regulation of the kinase activity. In terms of biological role, may play a role in signal transduction pathways that involve calcium as a second messenger. This is CDPK-related kinase 4 (CRK4) from Arabidopsis thaliana (Mouse-ear cress).